A 301-amino-acid chain; its full sequence is Possible hemolysin C (301 aa).

CBS domains are found at residues Met-79–Leu-141 and Leu-144–Glu-201.

This sequence belongs to the UPF0053 family. Hemolysin C subfamily.

In Rickettsia bellii (strain RML369-C), this protein is Possible hemolysin C (tlyC).